A 65-amino-acid polypeptide reads, in one-letter code: Muscarinic toxin 3 (65 aa).

4 disulfides stabilise this stretch: Cys3-Cys24, Cys17-Cys42, Cys46-Cys57, and Cys58-Cys63.

Belongs to the three-finger toxin family. Short-chain subfamily. Aminergic toxin sub-subfamily. Expressed by the venom gland.

The protein localises to the secreted. Potent antagonist (IC(50)=1-10 nM) of M4 (CHRM4) muscarinic receptors, and CHRM1, ADRA1A, ADRA2A and ADRA2C adrenergic receptors. Also antagonises ADRA1B and ADRA1D adrenergic receptors with a 10-times lower affinity. The chain is Muscarinic toxin 3 from Dendroaspis angusticeps (Eastern green mamba).